The following is a 309-amino-acid chain: Ribose-phosphate pyrophosphokinase (309 aa).

ATP-binding positions include Asp-42 to Glu-44 and Arg-102 to Gln-103. Residues His-136 and Asp-175 each contribute to the Mg(2+) site. Lys-199 is a catalytic residue. D-ribose 5-phosphate-binding positions include Arg-201, Asp-226, and Ser-230–Thr-234.

It belongs to the ribose-phosphate pyrophosphokinase family. Class III (archaeal) subfamily. The cofactor is Mg(2+).

The protein resides in the cytoplasm. The catalysed reaction is D-ribose 5-phosphate + ATP = 5-phospho-alpha-D-ribose 1-diphosphate + AMP + H(+). The protein operates within metabolic intermediate biosynthesis; 5-phospho-alpha-D-ribose 1-diphosphate biosynthesis; 5-phospho-alpha-D-ribose 1-diphosphate from D-ribose 5-phosphate (route I): step 1/1. Involved in the biosynthesis of the central metabolite phospho-alpha-D-ribosyl-1-pyrophosphate (PRPP) via the transfer of pyrophosphoryl group from ATP to 1-hydroxyl of ribose-5-phosphate (Rib-5-P). This chain is Ribose-phosphate pyrophosphokinase, found in Aeropyrum pernix (strain ATCC 700893 / DSM 11879 / JCM 9820 / NBRC 100138 / K1).